Here is a 598-residue protein sequence, read N- to C-terminus: MASLRRVKVLLVLNLIAVAGFVIFLAKCRPIAVRSGDAFHEIRPRAEVANLSAHSASPIQDAVLKRLSLLEDIVYRQLNGLSKSLGLIEGYGGRGKGGLPATLSPSEEEKAKGPHEKYGYNSYLSEKISLDRSIPDYRPTKCKELKYSKELPQISIIFIFVNEALSVILRSVHSAVNHTPTHLLKEIILVDDNSDEEELKAPLEEYVHKRYPGLVKVVRNQKREGLIRARIEGWKAATGQVTGFFDAHVEFTAGWAEPVLSRIQENRKRVILPSIDNIKQDNFEVQRYENSAHGYSWELWCMYISPPKDWWDAGDPSLPIRTPAMIGCSFVVNRKFFGEIGLLDPGMDVYGGENIELGIKVWLCGGSMEVLPCSRVAHIERKKKPYNSNIGFYTKRNALRVAEVWMDDYKSHVYIAWNLPLENPGIDIGDVSERKALRKSLKCKNFQWYLDHVYPEMRRYNNTIAYGELRNNKAKDVCLDQGPLENHTAILYPCHGWGPQLARYTKEGFLHLGALGTTTLLPDTRCLVDNSKSRLPQLLDCDKVKSSLYKRWNFIQNGAIMNKGTGRCLEVENRGLAGIDLILRSCTGQRWAIKNPIK.

Topologically, residues 1–6 (MASLRR) are cytoplasmic. Residues 7–27 (VKVLLVLNLIAVAGFVIFLAK) form a helical; Signal-anchor for type II membrane protein membrane-spanning segment. Topologically, residues 28–598 (CRPIAVRSGD…QRWAIKNPIK (571 aa)) are lumenal. Residue N50 is glycosylated (N-linked (GlcNAc...) asparagine). 2 cysteine pairs are disulfide-bonded: C142-C373 and C364-C443. Residues 151 to 262 (LPQISIIFIF…AGWAEPVLSR (112 aa)) are catalytic subdomain A. Substrate contacts are provided by D192 and R223. The Mn(2+) site is built by D246, H248, and H378. Residues 319-381 (PIRTPAMIGC…PCSRVAHIER (63 aa)) are catalytic subdomain B. Residues R381 and Y386 each coordinate substrate. Residues N461 and N486 are each glycosylated (N-linked (GlcNAc...) asparagine). Residues 465 to 594 (AYGELRNNKA…SCTGQRWAIK (130 aa)) enclose the Ricin B-type lectin domain. Disulfide bonds link C478–C494, C526–C541, and C568–C586.

This sequence belongs to the glycosyltransferase 2 family. GalNAc-T subfamily. It depends on Mn(2+) as a cofactor.

It localises to the golgi apparatus membrane. It carries out the reaction L-seryl-[protein] + UDP-N-acetyl-alpha-D-galactosamine = a 3-O-[N-acetyl-alpha-D-galactosaminyl]-L-seryl-[protein] + UDP + H(+). It catalyses the reaction L-threonyl-[protein] + UDP-N-acetyl-alpha-D-galactosamine = a 3-O-[N-acetyl-alpha-D-galactosaminyl]-L-threonyl-[protein] + UDP + H(+). The protein operates within protein modification; protein glycosylation. In terms of biological role, may catalyze the initial reaction in O-linked oligosaccharide biosynthesis, the transfer of an N-acetyl-D-galactosamine residue to a serine or threonine residue on the protein receptor. This is Polypeptide N-acetylgalactosaminyltransferase 17 from Mus musculus (Mouse).